The sequence spans 611 residues: Leukotriene A-4 hydrolase (611 aa).

Lysine 73 is subject to N6-acetyllysine. A peptide is bound by residues 135–137 (QCQ) and 267–272 (PYGGME). A Zn(2+)-binding site is contributed by histidine 296. Glutamate 297 (proton acceptor) is an active-site residue. Histidine 300 and glutamate 319 together coordinate Zn(2+). Lysine 337 bears the N6-acetyllysine mark. Catalysis depends on tyrosine 384, which acts as the Proton donor. Lysine 414 is modified (N6-acetyllysine). Serine 416 is subject to Phosphoserine. Residue 564 to 566 (RMK) coordinates a peptide. Lysine 573 is modified (N6-acetyllysine).

It belongs to the peptidase M1 family. As to quaternary structure, monomer. Requires Zn(2+) as cofactor. In terms of processing, phosphorylation at Ser-416 inhibits leukotriene-A4 hydrolase activity. As to expression, isoform 1 and isoform 2 are expressed in monocytes, lymphocytes, neutrophils, reticulocytes, platelets and fibroblasts.

It localises to the cytoplasm. It catalyses the reaction leukotriene A4 + H2O = leukotriene B4. It carries out the reaction (5S,6S)-epoxy-(18R)-hydroxy-(7E,9E,11Z,14Z,16E)-eicosapentaenoate + H2O = resolvin E1. The catalysed reaction is (5S,6S)-epoxy-(18S)-hydroxy-(7E,9E,11Z,14Z,16E)-eicosapentaenoate + H2O = 18S-resolvin E1. The enzyme catalyses Release of the N-terminal residue from a tripeptide.. It functions in the pathway lipid metabolism; leukotriene B4 biosynthesis. Inhibited by bestatin. The epoxide hydrolase activity is restrained by suicide inactivation that involves binding of LTA4 to Tyr-379. 4-(4-benzylphenyl)thiazol-2-amine (ARM1) selectively inhibits the epoxide hydrolase activity. Its function is as follows. Bifunctional zinc metalloenzyme that comprises both epoxide hydrolase (EH) and aminopeptidase activities. Acts as an epoxide hydrolase to catalyze the conversion of LTA4 to the pro-inflammatory mediator leukotriene B4 (LTB4). Also has aminopeptidase activity, with high affinity for N-terminal arginines of various synthetic tripeptides. In addition to its pro-inflammatory EH activity, may also counteract inflammation by its aminopeptidase activity, which inactivates by cleavage another neutrophil attractant, the tripeptide Pro-Gly-Pro (PGP), a bioactive fragment of collagen generated by the action of matrix metalloproteinase-9 (MMP9) and prolylendopeptidase (PREPL). Involved also in the biosynthesis of resolvin E1 and 18S-resolvin E1 from eicosapentaenoic acid, two lipid mediators that show potent anti-inflammatory and pro-resolving actions. The chain is Leukotriene A-4 hydrolase (LTA4H) from Homo sapiens (Human).